The sequence spans 273 residues: MAPQQQPSSIPTPYEDLLREILETGTPKGDRTGTGTTSLFGRQIRYDLSAGFPLITTKSVHVKSVVGELLWFLRGDSNVRWLQENGIRIWNEWADENGDLGPVYGVQWRSWPTPNGQHIDQIAGALETLQTNPDSRRNIVSAWNVSELDNMALPPCHLLFQLYVANGKLSCQLYQRSADMFLGVPFNIASYSLLTHMFAQQAGLEVGEFIWTGGDCHIYDNHVEQVKLQLSRDARPYPQLKLNKAADMFSYDFSDIEFTGYDPHPVIKAKVAV.

Arginine 31 is a binding site for dUMP. Position 61 (histidine 61) interacts with (6R)-5,10-methylene-5,6,7,8-tetrahydrofolate. 136 to 137 (RR) lines the dUMP pocket. Cysteine 156 functions as the Nucleophile in the catalytic mechanism. DUMP-binding positions include 176 to 179 (RSAD), asparagine 187, and 217 to 219 (HIY). Aspartate 179 lines the (6R)-5,10-methylene-5,6,7,8-tetrahydrofolate pocket. Alanine 272 contacts (6R)-5,10-methylene-5,6,7,8-tetrahydrofolate.

The protein belongs to the thymidylate synthase family. Bacterial-type ThyA subfamily. As to quaternary structure, homodimer.

It localises to the cytoplasm. The catalysed reaction is dUMP + (6R)-5,10-methylene-5,6,7,8-tetrahydrofolate = 7,8-dihydrofolate + dTMP. It participates in pyrimidine metabolism; dTTP biosynthesis. In terms of biological role, catalyzes the reductive methylation of 2'-deoxyuridine-5'-monophosphate (dUMP) to 2'-deoxythymidine-5'-monophosphate (dTMP) while utilizing 5,10-methylenetetrahydrofolate (mTHF) as the methyl donor and reductant in the reaction, yielding dihydrofolate (DHF) as a by-product. This enzymatic reaction provides an intracellular de novo source of dTMP, an essential precursor for DNA biosynthesis. The chain is Thymidylate synthase from Corynebacterium jeikeium (strain K411).